A 278-amino-acid polypeptide reads, in one-letter code: DNA repair protein XRCC2 (278 aa).

Residue Ser-10 is modified to Phosphoserine.

Belongs to the RecA family. RAD51 subfamily. Interacts with RAD51D. Part of the BCDX2 complex consisting of RAD51B, RAD51C, RAD51D and XRCC2; the complex has a ring-like structure arranged into a flat disk around a central channel. In the absence of DNA, the BCDX2 subcomplex XRCC2:RAD51D formed a multimeric ring structure; in the presence of single-stranded DNA it formed a filamentous structure with the ssDNA. In terms of tissue distribution, expressed at low level in somatic tissues and at high level in testis.

Its subcellular location is the nucleus. In terms of biological role, involved in the homologous recombination repair (HRR) pathway of double-stranded DNA, thought to repair chromosomal fragmentation, translocations and deletions. Part of the RAD51 paralog protein complex BCDX2 which acts in the BRCA1-BRCA2-dependent HR pathway. Upon DNA damage, BCDX2 acts downstream of BRCA2 recruitment and upstream of RAD51 recruitment. BCDX2 binds predominantly to the intersection of the four duplex arms of the Holliday junction and to junction of replication forks. The BCDX2 complex was originally reported to bind single-stranded DNA, single-stranded gaps in duplex DNA and specifically to nicks in duplex DNA. This is DNA repair protein XRCC2 (Xrcc2) from Mus musculus (Mouse).